The chain runs to 370 residues: GTPase Obg (370 aa).

The Obg domain occupies 1 to 159 (MKFIDEARIE…RMLRLELKVL (159 aa)). Positions 160–334 (ADVGLLGMPN…LCYAIYDYLA (175 aa)) constitute an OBG-type G domain. GTP-binding positions include 166–173 (GMPNAGKS), 191–195 (FTTLA), 213–216 (DIPG), 284–287 (NKLD), and 315–317 (SAL). Mg(2+) is bound by residues Ser-173 and Thr-193. The tract at residues 344–370 (EEEDLATDVRFRDAPPADGGATPGGDA) is disordered.

It belongs to the TRAFAC class OBG-HflX-like GTPase superfamily. OBG GTPase family. In terms of assembly, monomer. Requires Mg(2+) as cofactor.

It is found in the cytoplasm. An essential GTPase which binds GTP, GDP and possibly (p)ppGpp with moderate affinity, with high nucleotide exchange rates and a fairly low GTP hydrolysis rate. Plays a role in control of the cell cycle, stress response, ribosome biogenesis and in those bacteria that undergo differentiation, in morphogenesis control. This Burkholderia ambifaria (strain MC40-6) protein is GTPase Obg.